We begin with the raw amino-acid sequence, 92 residues long: FMRFamide-like neuropeptides 5 (92 aa).

Residues 1-41 (MSSRSTTIAFLFIATLLVFQCVSAQSSAEDADYLEKYQRIA) constitute a propeptide that is removed on maturation. A phenylalanine amide mark is found at Phe-51 and Phe-61. A propeptide spanning residues 64-82 (SRNTWEDGYASPSVNELYV) is cleaved from the precursor. A Phenylalanine amide modification is found at Phe-91.

This sequence belongs to the FARP (FMRFamide related peptide) family. As to expression, each flp gene is expressed in a distinct set of neurons. Flp-5 is expressed in the ASE sensory neurons, the 14 and M4 cholinergic pharyngeal motoneurons, and the PVT and RMG neurons. It is weakly expressed in the PB and 12 neurons. Also expressed in pharyngeal muscle.

It localises to the secreted. Functionally, FMRFamides and FMRFamide-like peptides are neuropeptides. GAKFIRF-amide has an excitatory effect on dissected pharyngeal myogenic muscle system. This is FMRFamide-like neuropeptides 5 from Caenorhabditis elegans.